A 123-amino-acid polypeptide reads, in one-letter code: Protein lgg-1 (123 aa).

Glycine 116 carries Phosphatidylethanolamine amidated glycine lipidation. Residues glycine 117–glutamate 123 constitute a propeptide, removed in mature form.

The protein belongs to the ATG8 family. As to quaternary structure, interacts with sepa-1 (via the LIR motifs); the interaction is direct. Interacts with allo-1 (via the LIR motif). Interacts with sqst-1 (via the LIR motifs); the interaction is direct. Both lipidated and unlipidated forms interact with epg-7 (via the LIR motif); the interaction is direct. Interacts with epg-2 (via the LIR motifs); the interaction is direct. Interacts with atg-13; the interaction is direct. Interacts with unc-51 (via the LIR motif); the interaction is direct. Interacts with atg-7; the interaction is direct. Interacts with atg-3. The interaction with atg-7 and atg-3 may be required for the lipidation of lgg-1. Post-translationally, cleaved by atg-4.1 and/or atg-4.2, after Gly-116 to form a thioester bond with 'Cys-523' of atg-7 (E1-like activating enzyme) before being transferred to 'Cys-255' of atg-3 (E2 conjugating enzyme), in order to be amidated with phosphatidylethanolamine. This lipid modification anchors lgg-1 to membranes and can be reversed by atg-4.2, releasing soluble lgg-1. C-terminal cleavage is essential for autophagosome initiation and biogenesis. Lipidation is not essential for autophagy or development but the lipidated form is involved in cargo recognition and autophagosome biogenesis. Lipidation regulates lgg-2-positive autophagosome formation. Expressed in PLML touch receptor neuron and in the ventral nerve cord. Expressed in AIY interneurons.

It localises to the preautophagosomal structure. The protein localises to the cytoplasmic vesicle. It is found in the autophagosome. Its subcellular location is the autophagosome membrane. The protein resides in the lysosome lumen. It localises to the mitochondrion. The protein localises to the cytoplasm. It is found in the phagosome membrane. Its subcellular location is the cell membrane. The protein resides in the cell projection. It localises to the dendrite. The protein localises to the perikaryon. In terms of biological role, ubiquitin-like modifier involved in the formation of autophagosomal vacuoles (autophagosomes). When lipidated mediates tethering between adjacent membranes and stimulates membrane fusion during autophagy. Recruits lipidated-lgg-2 to maturing autophagosomes. Acts in the aggrephagy pathway, which is the macroautophagic degradation of ubiquitinated protein aggregates, and preferentially interacts with autophagy proteins and substrates containing LIR motifs to mediate autophagosome formation and protein aggregate degradation. In particular, binds to components of the unc-51-atg-13 complex to regulate autophagosome formation and cargo sequestration. Required for the degradation of specific sepa-1- and sqst-1-containing protein aggregates during embryogenesis. Involved in allophagy, which is an autophagic process in which paternal mitochondria and organelles are degraded during fertilization, and moreover is required for the formation of lgg-2-positive allophagic autophagosomes in embryos. Involved in the clearance of apoptotic cells by promoting the delivery of engulfed apoptotic cells to the lysosome. Plays a role in the distribution and clearance of germ cell specific P-granules from somatic cells. Also plays a role in the autophagy-mediated degradation of ribosomal RNA and ribosomal proteins in lysosomes. Involved in xenophagy, the autophagy-mediated degradation of pathogens and pathogen products, such as toxins. Required for normal survival when exposed to pathogenic bacteria S.typhimurium probably by promoting autophagic degradation of intracellular S.typhimurium. Also plays a role in membrane-pore repair. Plays a role in mitophagy. Essential for dauer development and longevity, including longevity in response to moderate, short-term heat shock, also known as a hormetic heat shock. The chain is Protein lgg-1 from Caenorhabditis elegans.